Consider the following 182-residue polypeptide: Pyruvoyl-dependent arginine decarboxylase (182 aa).

Position 44 is a pyruvic acid (Ser) (Ser44).

It belongs to the PdaD family. The cofactor is pyruvate.

It catalyses the reaction L-arginine + H(+) = agmatine + CO2. This chain is Pyruvoyl-dependent arginine decarboxylase, found in Picrophilus torridus (strain ATCC 700027 / DSM 9790 / JCM 10055 / NBRC 100828 / KAW 2/3).